The following is a 472-amino-acid chain: Alanine--anticapsin ligase (472 aa).

E109 contacts Mg(2+). Residues K138 and K178 each coordinate ATP. An ATP-grasp domain is found at 142–355 (RDAFNKAGVK…MAQLLLDVLC (214 aa)). L182 provides a ligand contact to Mg(2+). Residues 184–185 (SS), 226–229 (EEFL), and Q268 each bind ATP. Substrate-binding positions include E273 and 309-311 (HTE). Mg(2+) contacts are provided by E311 and E324. Residue 328 to 331 (RFAG) participates in substrate binding.

As to quaternary structure, monomer or homodimer. Mg(2+) serves as cofactor.

The catalysed reaction is L-anticapsin + L-alanine + ATP = bacilysin + ADP + phosphate + H(+). It participates in antibiotic biosynthesis; bacilysin biosynthesis. In terms of biological role, part of the bacABCDEFG operon responsible for the biosynthesis of bacilysin, an irreversible inactivator of the glutaminase domain of glucosamine synthetase. Catalyzes the formation of alpha-dipeptides from various L-amino acids in the presence of ATP. In vivo catalyzes the ligation of L-alanine and L-anticapsin (epoxycyclohexanonyl-Ala) to produce the final bacilysin antibiotic (L-Ala-L-4S-cyclohexenonyl-Ala dipeptide). The substrate specificity is restricted to small amino acids such as L-Ala, for the N-terminal end of the dipeptide, whereas a wide range of hydrophobic amino acids such as L-Phe, L-Tyr and L-Met are recognized for the C-terminal end. The protein is Alanine--anticapsin ligase of Bacillus subtilis (strain 168).